We begin with the raw amino-acid sequence, 947 residues long: Pyruvate, phosphate dikinase 1, chloroplastic (947 aa).

A chloroplast-targeting transit peptide spans 1 to 62 (MAASVSRAIC…GRGQHCSPLR (62 aa)). Residues 21 to 54 (DREATSFARRSVAAPRPPHAKAAGVIRSDSGAGR) are disordered. Ala63 carries the N-acetylalanine; partial modification. Phosphothreonine is present on Thr309. Residue Ser506 is modified to Phosphoserine. Thr527 carries the phosphothreonine; by PDRP1 modification. Ser528 is modified (phosphoserine; by PDRP1). His529 serves as the catalytic Tele-phosphohistidine intermediate. Substrate-binding residues include Arg635, Arg692, Glu821, Gly842, Thr843, Asn844, and Asp845. Glu821 is a binding site for Mg(2+). A Mg(2+)-binding site is contributed by Asp845. Catalysis depends on Cys907, which acts as the Proton donor.

The protein belongs to the PEP-utilizing enzyme family. As to quaternary structure, homotetramer. The cofactor is Mg(2+). Phosphorylation of Thr-527 in the dark inactivates the enzyme, dephosphorylation upon light stimulation reactivates the enzyme. More highly phosphorylated when grown under high rather than low light regimes (70 vs 900 umol photons/m-2/s). the degree of phosphorylation is strictly regulated by light intensity and the light/dark transition has no influence. Phosphorylated in both mesophyll and bundle sheath cells. The phosphorylation at Ser-528 may be important for the phosphorylation at Thr-527 and may also be regulated by light intensity. In terms of tissue distribution, isoform C4PPDKZM1 mainly localized in mesophyll cells and only a low level is found in bundle sheath cells. Isoform CYPPDKZM1 expressed in roots, stems and etiolated leaves.

The protein resides in the plastid. Its subcellular location is the chloroplast. It is found in the cytoplasm. It catalyses the reaction pyruvate + phosphate + ATP = phosphoenolpyruvate + AMP + diphosphate + H(+). Its pathway is photosynthesis; C4 acid pathway. Its activity is regulated as follows. Activated by light-induced dephosphorylation. Inhibited by dark-induced phosphorylation. Both reactions are catalyzed by PDRP1. Inactivated by cold due to the dissociation of the homotetramer. Independent of circadian regulation. Functionally, formation of phosphoenolpyruvate, which is the primary acceptor of CO(2) in C4 and some Crassulacean acid metabolism plants. The protein is Pyruvate, phosphate dikinase 1, chloroplastic of Zea mays (Maize).